A 380-amino-acid polypeptide reads, in one-letter code: MAQNEGIPNGTLSAMVIDEDKCHADSTCSMICTQLNFCVTVFTSPIKALDFLQNQAEGVHLVLADVQMEEMNGFEFLKVARELHKSIQVIMMSTETTIYTMKRCVQLGAQILVKKPLDVVTIQNLWQHLDIKVLKMEKIKDMLQGVGDKSTCANEMNSFPENQKDGTKRKYYLMWTPHLQKKFLHALEILGEGQISLMIMDVDNIDRKQISTHLQKHRLQLKKKLSKASFTKGSNEDTSNPSAKNHLTCRTMTLQPHPYTNQPAETTMQIHSEDVEHDDIYDAMRRALQDGTAFDESKYSSDPFSNEDEDVVGDGYADKANAIDSSGDHYQVAVVLTTPHNVDYTQEIMNKVTTSDDVQVTRGGKATVSRLVDYSDSDSD.

The Response regulatory domain occupies 13–130 (SAMVIDEDKC…TIQNLWQHLD (118 aa)). A 4-aspartylphosphate modification is found at Asp-65. A DNA-binding region (myb-like GARP) is located at residues 169–223 (RKYYLMWTPHLQKKFLHALEILGEGQISLMIMDVDNIDRKQISTHLQKHRLQLKK). The tract at residues 225-245 (LSKASFTKGSNEDTSNPSAKN) is disordered. Residues 228-245 (ASFTKGSNEDTSNPSAKN) are compositionally biased toward polar residues.

It belongs to the ARR family. Type-B subfamily. Post-translationally, two-component system major event consists of a His-to-Asp phosphorelay between a sensor histidine kinase (HK) and a response regulator (RR). In plants, the His-to-Asp phosphorelay involves an additional intermediate named Histidine-containing phosphotransfer protein (HPt). This multistep phosphorelay consists of a His-Asp-His-Asp sequential transfer of a phosphate group between first a His and an Asp of the HK protein, followed by the transfer to a conserved His of the HPt protein and finally the transfer to an Asp in the receiver domain of the RR protein.

Its subcellular location is the nucleus. Its function is as follows. Transcriptional activator that binds specific DNA sequence. Functions as a response regulator involved in His-to-Asp phosphorelay signal transduction system. Phosphorylation of the Asp residue in the receiver domain activates the ability of the protein to promote the transcription of target genes. May directly activate some type-A response regulators in response to cytokinins. This is Two-component response regulator ORR28 from Oryza sativa subsp. indica (Rice).